Reading from the N-terminus, the 306-residue chain is MKNEFLNFEQIDRATWQQLHRKTTIPLSQSELNSIKSFNDRIQLHEVSDIYLPLVNLIHIYRKARKDLNFTKSLFLQKTIKPQPFIIGVSGSVAVGKSTTSRLLQILIARTFKYAKVELVTTDGFLQPYAVLEERQLLNKKGFPESYDMEKLIDFLDKIKNGYDCQIPVYSHEIYDIIPNKTQEIKSPDFLIVEGINVFQNPQNQRLYVSDYFDLSIYVDADVEHIETWYLERFQKLLTLAKNDPNNYYHRFTQMTYPEILSIAQNTWKNINLANLEKFIEPTRNRADIILHKAENHEIDKIYLKK.

91–98 is an ATP binding site; sequence GSVAVGKS.

It belongs to the prokaryotic pantothenate kinase family.

It localises to the cytoplasm. The enzyme catalyses (R)-pantothenate + ATP = (R)-4'-phosphopantothenate + ADP + H(+). The protein operates within cofactor biosynthesis; coenzyme A biosynthesis; CoA from (R)-pantothenate: step 1/5. This is Pantothenate kinase from Streptococcus suis (strain 98HAH33).